The chain runs to 238 residues: UPF0280 protein Msm_0088 (238 aa).

This sequence belongs to the UPF0280 family.

This Methanobrevibacter smithii (strain ATCC 35061 / DSM 861 / OCM 144 / PS) protein is UPF0280 protein Msm_0088.